A 226-amino-acid polypeptide reads, in one-letter code: Cytidylate kinase (226 aa).

Residue 11 to 19 (GPASAGKST) coordinates ATP.

The protein belongs to the cytidylate kinase family. Type 1 subfamily.

The protein localises to the cytoplasm. The enzyme catalyses CMP + ATP = CDP + ADP. The catalysed reaction is dCMP + ATP = dCDP + ADP. The chain is Cytidylate kinase from Pediococcus pentosaceus (strain ATCC 25745 / CCUG 21536 / LMG 10740 / 183-1w).